The chain runs to 349 residues: MNNKLTERQILILKAIINEYISTATAVGSKIILEKYFNNEVSSATIRNEMSVLEKEKYIEKPHTSAGRIPTIKGYQYYEANLAETKISERLKQKLMAILNKRYHSIDEVIEQSVEFINNVTNLPSVITKFKSYDLLKRMDLIKINNNTAIILIVSSSGEVIKKTIKYQNSIQYNDVSTCVQIFNDRLVDTPFIELKEKLTAIKEIVRTKVHEYEFVMQRIVNYIFDINEKSTINIKGTKKLVIHPEFHDHNKLSEILNLLENTSIWEQISFMQQKTGKSVITFGQDIGIEGISVASTLIETEQNKHQIAIVGPNRMEYGKIKGLLNILKEQVEKIDHLNLPLEEINKES.

This sequence belongs to the HrcA family.

Its function is as follows. Negative regulator of class I heat shock genes (grpE-dnaK-dnaJ and groELS operons). Prevents heat-shock induction of these operons. In Mycoplasmoides gallisepticum (strain R(low / passage 15 / clone 2)) (Mycoplasma gallisepticum), this protein is Heat-inducible transcription repressor HrcA.